Reading from the N-terminus, the 138-residue chain is uncharacterized protein (138 aa).

35 to 42 (DFIGSFYN) is an ATP binding site.

This is an uncharacterized protein from Acanthamoeba polyphaga mimivirus (APMV).